A 612-amino-acid polypeptide reads, in one-letter code: UvrABC system protein C (612 aa).

The GIY-YIG domain maps to 20–98 (THSGVYRMLD…IKQHRPKYNI (79 aa)). The UVR domain maps to 208 to 243 (STVLEEISAKMYQASEDMEYEKAQVYRDQLVVLRKL).

This sequence belongs to the UvrC family. Interacts with UvrB in an incision complex.

The protein resides in the cytoplasm. Functionally, the UvrABC repair system catalyzes the recognition and processing of DNA lesions. UvrC both incises the 5' and 3' sides of the lesion. The N-terminal half is responsible for the 3' incision and the C-terminal half is responsible for the 5' incision. The chain is UvrABC system protein C from Francisella tularensis subsp. novicida (strain U112).